The sequence spans 414 residues: Probable solanesyl-diphosphate synthase 3, chloroplastic (414 aa).

Residues 1 to 23 (MAAPSSLASSSHLSRRATAAASP) are compositionally biased toward low complexity. Residues 1–36 (MAAPSSLASSSHLSRRATAAASPSIPPPSPPPPPQR) are disordered. Residues 1–72 (MAAPSSLASS…KPGVAAVDVP (72 aa)) constitute a chloroplast transit peptide. The span at 24-35 (SIPPPSPPPPPQ) shows a compositional bias: pro residues. Positions 134, 137, and 172 each coordinate isopentenyl diphosphate. Asp-179 and Asp-183 together coordinate Mg(2+). An all-trans-polyprenyl diphosphate is bound at residue Arg-188. Arg-189 contributes to the isopentenyl diphosphate binding site. An all-trans-polyprenyl diphosphate contacts are provided by Lys-265, Thr-266, Gln-303, and Lys-320.

The protein belongs to the FPP/GGPP synthase family. In terms of assembly, homodimer. Mg(2+) is required as a cofactor.

The protein localises to the plastid. It localises to the chloroplast. It catalyses the reaction 7 isopentenyl diphosphate + (2E)-geranyl diphosphate = all-trans-nonaprenyl diphosphate + 7 diphosphate. In terms of biological role, involved in providing solanesyl diphosphate for plastoquinone-9 (PQ-9) formation. This Oryza sativa subsp. japonica (Rice) protein is Probable solanesyl-diphosphate synthase 3, chloroplastic.